A 308-amino-acid chain; its full sequence is Testis-specific Y-encoded protein 3 (308 aa).

It belongs to the nucleosome assembly protein (NAP) family.

It localises to the cytoplasm. It is found in the nucleus. May be involved in sperm differentiation and proliferation. In Homo sapiens (Human), this protein is Testis-specific Y-encoded protein 3 (TSPY3).